The chain runs to 376 residues: MSERFSFDLHASDGKARTGVIHTPRGGVRTPAFMPVGTAATVKAMMPESVRATGADILLGNTYHLMLRPTAERIDRLGGLHRFMNWDRPILTDSGGFQVMSLAGLRKLTEKGVTFKSHIDGSKHELTPERSMEIQRLLGSDIVMCFDECPALPADRDRIAESMRLSMRWAERSREAFGDRPGHALFGIMQGGLEQDLREESAQALRSVGFDGYAVGGLAVGEGQAAMFDCLDYAPGFLPEDKPRYLMGVGKPDDIVGAVKRGIDMMDCVLPSRSGRTGQVFTRHGVLNIKNARHMDDPRPLDEACTCPACRNYSRAYLHHVFRSQEIISSMLLTWHNLHYFQEIMQGMREAIAGGTFEAWEAAFHAGRAQGDIEPL.

D93 serves as the catalytic Proton acceptor. Residues 93-97, D147, Q190, and G217 contribute to the substrate site; that span reads DSGGF. An RNA binding region spans residues 248–254; that stretch reads GVGKPDD. D267 serves as the catalytic Nucleophile. Zn(2+) is bound by residues C305, C307, C310, and H336.

It belongs to the queuine tRNA-ribosyltransferase family. Homodimer. Within each dimer, one monomer is responsible for RNA recognition and catalysis, while the other monomer binds to the replacement base PreQ1. Zn(2+) is required as a cofactor.

It carries out the reaction 7-aminomethyl-7-carbaguanine + guanosine(34) in tRNA = 7-aminomethyl-7-carbaguanosine(34) in tRNA + guanine. Its pathway is tRNA modification; tRNA-queuosine biosynthesis. In terms of biological role, catalyzes the base-exchange of a guanine (G) residue with the queuine precursor 7-aminomethyl-7-deazaguanine (PreQ1) at position 34 (anticodon wobble position) in tRNAs with GU(N) anticodons (tRNA-Asp, -Asn, -His and -Tyr). Catalysis occurs through a double-displacement mechanism. The nucleophile active site attacks the C1' of nucleotide 34 to detach the guanine base from the RNA, forming a covalent enzyme-RNA intermediate. The proton acceptor active site deprotonates the incoming PreQ1, allowing a nucleophilic attack on the C1' of the ribose to form the product. After dissociation, two additional enzymatic reactions on the tRNA convert PreQ1 to queuine (Q), resulting in the hypermodified nucleoside queuosine (7-(((4,5-cis-dihydroxy-2-cyclopenten-1-yl)amino)methyl)-7-deazaguanosine). This is Queuine tRNA-ribosyltransferase from Ruegeria pomeroyi (strain ATCC 700808 / DSM 15171 / DSS-3) (Silicibacter pomeroyi).